The chain runs to 272 residues: Probable proteasome subunit alpha type-6 (272 aa).

Low complexity predominate over residues 243–261 (AARASRAAAEEPQAPTAEA). A disordered region spans residues 243–272 (AARASRAAAEEPQAPTAEAILDSADAMETD).

The protein belongs to the peptidase T1A family. The 26S proteasome consists of a 20S proteasome core and two 19S regulatory subunits. The 20S proteasome core is composed of 28 subunits that are arranged in four stacked rings, resulting in a barrel-shaped structure. The two end rings are each formed by seven alpha subunits, and the two central rings are each formed by seven beta subunits. The catalytic chamber with the active sites is on the inside of the barrel.

The protein resides in the cytoplasm. Its subcellular location is the nucleus. Its function is as follows. The proteasome is a multicatalytic proteinase complex which is characterized by its ability to cleave peptides with Arg, Phe, Tyr, Leu, and Glu adjacent to the leaving group at neutral or slightly basic pH. The proteasome has an ATP-dependent proteolytic activity. This is Probable proteasome subunit alpha type-6 from Schizosaccharomyces pombe (strain 972 / ATCC 24843) (Fission yeast).